The primary structure comprises 250 residues: Small ribosomal subunit protein uS5 (250 aa).

A compositionally biased stretch (polar residues) spans 1-22 (MNVVETSSEMNSNVEKASTPKQ). The segment at 1 to 40 (MNVVETSSEMNSNVEKASTPKQENNKRFERKSRPSSRQKV) is disordered. In terms of domain architecture, S5 DRBM spans 45 to 108 (FEEKVVTIRR…KEAKKNLVSV (64 aa)).

The protein belongs to the universal ribosomal protein uS5 family. As to quaternary structure, part of the 30S ribosomal subunit. Contacts proteins S4 and S8.

In terms of biological role, with S4 and S12 plays an important role in translational accuracy. Its function is as follows. Located at the back of the 30S subunit body where it stabilizes the conformation of the head with respect to the body. This Mycoplasma capricolum subsp. capricolum (strain California kid / ATCC 27343 / NCTC 10154) protein is Small ribosomal subunit protein uS5.